A 359-amino-acid polypeptide reads, in one-letter code: 3-dehydroquinate synthase (359 aa).

NAD(+) contacts are provided by residues 69–74 (DGEKYK), 103–107 (GVVGD), 127–128 (TT), K140, K149, and 167–170 (TLDT). The Zn(2+) site is built by E182, H245, and H262.

This sequence belongs to the sugar phosphate cyclases superfamily. Dehydroquinate synthase family. It depends on Co(2+) as a cofactor. Zn(2+) serves as cofactor. The cofactor is NAD(+).

It localises to the cytoplasm. The catalysed reaction is 7-phospho-2-dehydro-3-deoxy-D-arabino-heptonate = 3-dehydroquinate + phosphate. It participates in metabolic intermediate biosynthesis; chorismate biosynthesis; chorismate from D-erythrose 4-phosphate and phosphoenolpyruvate: step 2/7. Functionally, catalyzes the conversion of 3-deoxy-D-arabino-heptulosonate 7-phosphate (DAHP) to dehydroquinate (DHQ). This is 3-dehydroquinate synthase from Ruthia magnifica subsp. Calyptogena magnifica.